We begin with the raw amino-acid sequence, 383 residues long: MNELEFVTKHRRHLHQHPELSLHEFETTAYIKAFLDSLNIKYDCPLETGVIAYLEGNGSHTIAYRADIDALPILEENDVPYRSQSDHVMHACGHDGHTTALMLFVQRCKDMQDAGQLPQNVVFIFQPAEETGGGANRLIKAGAFDKYPIEAVFGIHVNPFADEGIAVIRDEEITASATEYRFFLTGLSSHVADKEQAHSCGEALQHVLTQISQIQQFHLNGLKRNIVHIGHFKAGEAINTVPSNGYLEGTIRTYDIDDLTIVKNQMHKIAESVKLLFNVECEVKFAEGYPPTINSPKLRTQIEDALIKADLNVYDKPTPFLFGEDFSFYGQQLAPAYFVFIGTRNEDKGFVTGLHTSHLNFDEKALINVVNFYENLLNNYKEV.

The protein belongs to the peptidase M20 family.

This is an uncharacterized protein from Staphylococcus aureus (strain N315).